The following is a 174-amino-acid chain: Beta-lactoglobulin (174 aa).

The N-terminal stretch at 1–18 is a signal peptide; the sequence is MKFLLLTVGLTSICAIQA. 2 cysteine pairs are disulfide-bonded: Cys-79–Cys-172 and Cys-122–Cys-134.

Belongs to the calycin superfamily. Lipocalin family. In terms of assembly, monomer.

The protein localises to the secreted. Its function is as follows. Lactoglobulin is the primary component of whey, it binds retinol and is probably involved in the transport of that molecule. This chain is Beta-lactoglobulin (LGB), found in Trichosurus vulpecula (Brush-tailed possum).